Reading from the N-terminus, the 357-residue chain is Trans-resveratrol di-O-methyltransferase (357 aa).

Positions 200, 223, 243, 244, and 257 each coordinate S-adenosyl-L-methionine. Residue His261 is the Proton acceptor of the active site.

The protein belongs to the class I-like SAM-binding methyltransferase superfamily. Cation-independent O-methyltransferase family. COMT subfamily.

It carries out the reaction trans-resveratrol + 2 S-adenosyl-L-methionine = pterostilbene + 2 S-adenosyl-L-homocysteine + 2 H(+). Functionally, catalyzes the biosynthesis of pterostilbene from resveratrol. Pterostilbene has both antifungal and pharmacological properties. Also has activity toward resveratrol monomethyl ether (RME). This chain is Trans-resveratrol di-O-methyltransferase (ROMT), found in Vitis vinifera (Grape).